Consider the following 174-residue polypeptide: NADH-quinone oxidoreductase subunit B 1 (174 aa).

[4Fe-4S] cluster-binding residues include Cys-38, Cys-39, Cys-104, and Cys-133.

The protein belongs to the complex I 20 kDa subunit family. In terms of assembly, NDH-1 is composed of 14 different subunits. Subunits NuoB, C, D, E, F, and G constitute the peripheral sector of the complex. Requires [4Fe-4S] cluster as cofactor.

It localises to the cell membrane. The catalysed reaction is a quinone + NADH + 5 H(+)(in) = a quinol + NAD(+) + 4 H(+)(out). Its function is as follows. NDH-1 shuttles electrons from NADH, via FMN and iron-sulfur (Fe-S) centers, to quinones in the respiratory chain. The immediate electron acceptor for the enzyme in this species is believed to be ubiquinone. Couples the redox reaction to proton translocation (for every two electrons transferred, four hydrogen ions are translocated across the cytoplasmic membrane), and thus conserves the redox energy in a proton gradient. This Chloroflexus aggregans (strain MD-66 / DSM 9485) protein is NADH-quinone oxidoreductase subunit B 1.